The sequence spans 176 residues: UPF0098 protein Rv2140c (176 aa).

Threonine 2 is subject to N-acetylthreonine.

The protein belongs to the UPF0098 family.

This Mycobacterium tuberculosis (strain ATCC 25618 / H37Rv) protein is UPF0098 protein Rv2140c.